Reading from the N-terminus, the 80-residue chain is Conotoxin SmIVB (80 aa).

The first 21 residues, 1 to 21, serve as a signal peptide directing secretion; sequence MGMRMMFTVFLLVVLATTVVS. A propeptide spanning residues 22–38 is cleaved from the precursor; the sequence is IPSDRASDGRNAEVNER. Residue proline 40 is modified to 4-hydroxyproline. Serine 45 carries an O-linked (HexNAc...) serine glycan. 5 positions are modified to 4-hydroxyproline: proline 55, proline 60, proline 61, proline 70, and proline 72. Serine 75 carries the serine amide modification. Positions 76–80 are excised as a propeptide; it reads GRRNH.

Belongs to the conotoxin A superfamily. Post-translationally, contains 3 disulfide bonds. As to expression, expressed by the venom duct.

The protein localises to the secreted. Its function is as follows. Neurotoxin with probable activity on sodium channel. Induces intense repetitive firing of the frog neuromuscular junction, leading to a tetanic contracture in muscle fiber (spastic paralysis). In vivo, shows the same effect as the whole venom when injected on fish prey. The chain is Conotoxin SmIVB from Conus stercusmuscarum (Fly-specked cone).